Consider the following 325-residue polypeptide: Elongation factor P--(R)-beta-lysine ligase (325 aa).

76–78 (SPE) contributes to the substrate binding site. ATP-binding positions include 100–102 (RNE) and asparagine 109. Tyrosine 118 contributes to the substrate binding site. 244–245 (EL) lines the ATP pocket. Glutamate 251 is a binding site for substrate. An ATP-binding site is contributed by glycine 300.

Belongs to the class-II aminoacyl-tRNA synthetase family. EpmA subfamily. In terms of assembly, homodimer.

It carries out the reaction D-beta-lysine + L-lysyl-[protein] + ATP = N(6)-((3R)-3,6-diaminohexanoyl)-L-lysyl-[protein] + AMP + diphosphate + H(+). Its function is as follows. With EpmB is involved in the beta-lysylation step of the post-translational modification of translation elongation factor P (EF-P) on 'Lys-34'. Catalyzes the ATP-dependent activation of (R)-beta-lysine produced by EpmB, forming a lysyl-adenylate, from which the beta-lysyl moiety is then transferred to the epsilon-amino group of EF-P 'Lys-34'. The polypeptide is Elongation factor P--(R)-beta-lysine ligase (Salmonella choleraesuis (strain SC-B67)).